Consider the following 53-residue polypeptide: Light-harvesting protein B-808/866 beta chain (53 aa).

Met1 carries the N-formylmethionine modification. Over 1 to 25 (MRDDDDLVPPKWRPLFNNQDWLLHD) the chain is Cytoplasmic. His24 and His42 together coordinate a bacteriochlorophyll. The helical transmembrane segment at 26–48 (IVVKSFYGFGVIAAIAHLLVYLW) threads the bilayer. The Periplasmic segment spans residues 49-53 (KPWLP).

This sequence belongs to the antenna complex beta subunit family. The core complex is formed by different alpha and beta chains, binding bacteriochlorophyll molecules, and arranged most probably in tetrameric structures disposed around the reaction center. The non-pigmented gamma chains may constitute additional components.

The protein localises to the cell membrane. Antenna complexes are light-harvesting systems, which transfer the excitation energy to the reaction centers. This is Light-harvesting protein B-808/866 beta chain (puf2B) from Chloroflexus aurantiacus (strain ATCC 29366 / DSM 635 / J-10-fl).